The following is a 400-amino-acid chain: MTQFASPVLHSLLDTDAYKLHMQQAVFHHYYDVHVAAEFRCRGDDLLGIYADAIREQIQAMQHLRLQDDEYQWLSALPFFKADYLNWLREFRFNPEQVTVSNDNGKLDIRLSGPWREVILWEVPLLAVISEMVHRYRSPQADVAQALDTLESKLVDFSALTAGLDMSRFHLMDFGTRRRFSREVQETIVKRLQQESWFVGTSNYDLARRLSLTPMGTQAHEWFQAHQQISPDLANSQRAALAAWLEEYPDQLGIALTDCITMDAFLRDFGVEFASRYQGLRHDSGDPVEWGEKAIAHYEKLGIDPQSKTLVFSDNLDLRKAVELYRHFSSRVQLSFGIGTRLTCDIPQVKPLNIVIKLVECNGKPVAKLSDSPGKTICHDKAFVRALRKAFDLPHIKKAS.

At His-220 the chain carries Phosphohistidine; by autocatalysis.

It belongs to the NAPRTase family. Transiently phosphorylated on a His residue during the reaction cycle. Phosphorylation strongly increases the affinity for substrates and increases the rate of nicotinate D-ribonucleotide production. Dephosphorylation regenerates the low-affinity form of the enzyme, leading to product release.

The catalysed reaction is nicotinate + 5-phospho-alpha-D-ribose 1-diphosphate + ATP + H2O = nicotinate beta-D-ribonucleotide + ADP + phosphate + diphosphate. It participates in cofactor biosynthesis; NAD(+) biosynthesis; nicotinate D-ribonucleotide from nicotinate: step 1/1. Catalyzes the synthesis of beta-nicotinate D-ribonucleotide from nicotinate and 5-phospho-D-ribose 1-phosphate at the expense of ATP. This chain is Nicotinate phosphoribosyltransferase, found in Shigella sonnei (strain Ss046).